The sequence spans 120 residues: Small ribosomal subunit protein bS16 (120 aa).

Residues 84–110 (KREVKSNPEKAKPGKRAQERAAEKAQK) are compositionally biased toward basic and acidic residues. The tract at residues 84-120 (KREVKSNPEKAKPGKRAQERAAEKAQKAADAAAATAE) is disordered. The segment covering 111–120 (AADAAAATAE) has biased composition (low complexity).

The protein belongs to the bacterial ribosomal protein bS16 family.

The chain is Small ribosomal subunit protein bS16 from Rhizobium rhizogenes (strain K84 / ATCC BAA-868) (Agrobacterium radiobacter).